The primary structure comprises 270 residues: MPGIETIKSSWADEVELDYGGLPPTTETVENGHKYVTEYKYNKDDKKTKVVRTYKISKQVVPKTVAKRRTWTKFGESKNDKPGPNSQTTMVSEEIIMQFLNSKEDEKANDPLLDPTKNIAKCRICNGEHWSVNCPYKGTAMDTNMMEKKATAAAAAAVDAPKSGKYVPPFLKDSVGKVGMGMRGRDDTAAIRISNLSESMTEADLEELVKKIGPQSKMYLARDKNTGLCKGFAYVHFKQRKDAAAAIEILNGHGYDHLILSVEWSKPQNN.

In terms of domain architecture, RRM spans 189–267 (AAIRISNLSE…LILSVEWSKP (79 aa)).

It belongs to the eIF-3 subunit G family. As to quaternary structure, component of the eukaryotic translation initiation factor 3 (eIF-3) complex. The eIF-3 complex interacts with pix.

The protein resides in the cytoplasm. In terms of biological role, RNA-binding component of the eukaryotic translation initiation factor 3 (eIF-3) complex, which is involved in protein synthesis of a specialized repertoire of mRNAs and, together with other initiation factors, stimulates binding of mRNA and methionyl-tRNAi to the 40S ribosome. The eIF-3 complex specifically targets and initiates translation of a subset of mRNAs involved in cell proliferation. This subunit can bind 18S rRNA. This chain is Eukaryotic translation initiation factor 3 subunit G-1, found in Drosophila ananassae (Fruit fly).